The sequence spans 256 residues: 5'-nucleotidase SurE (256 aa).

A divalent metal cation is bound by residues Asp-8, Asp-9, Ser-39, and Asn-91.

Belongs to the SurE nucleotidase family. A divalent metal cation serves as cofactor.

It localises to the cytoplasm. The catalysed reaction is a ribonucleoside 5'-phosphate + H2O = a ribonucleoside + phosphate. Functionally, nucleotidase that shows phosphatase activity on nucleoside 5'-monophosphates. The polypeptide is 5'-nucleotidase SurE (Marinobacter nauticus (strain ATCC 700491 / DSM 11845 / VT8) (Marinobacter aquaeolei)).